We begin with the raw amino-acid sequence, 251 residues long: Electron transfer flavoprotein subunit beta, mitochondrial (251 aa).

Belongs to the ETF beta-subunit/FixA family. In terms of assembly, heterodimer of an alpha and a beta subunit. FAD is required as a cofactor. Requires AMP as cofactor.

It is found in the mitochondrion matrix. The electron transfer flavoprotein serves as a specific electron acceptor for several dehydrogenases, including five acyl-CoA dehydrogenases, glutaryl-CoA and sarcosine dehydrogenase. It transfers the electrons to the main mitochondrial respiratory chain via ETF-ubiquinone oxidoreductase (ETF dehydrogenase). Involved in leucine catabolism and in phytol degradation. The chain is Electron transfer flavoprotein subunit beta, mitochondrial (ETFB) from Arabidopsis thaliana (Mouse-ear cress).